The primary structure comprises 712 residues: Polyribonucleotide nucleotidyltransferase (712 aa).

Aspartate 485 and aspartate 491 together coordinate Mg(2+). In terms of domain architecture, KH spans 552 to 611; that stretch reads PRIHTMKIDPKKIKDVIGKGGAVIRSLTEETGTSIDIDDDGTVKIAATDNNAAKMVMSRI. Positions 621-689 constitute an S1 motif domain; sequence NAIYTGKVSR…RQNRIRLTMK (69 aa).

Belongs to the polyribonucleotide nucleotidyltransferase family. Component of the RNA degradosome, which is a multiprotein complex involved in RNA processing and mRNA degradation. The cofactor is Mg(2+).

It localises to the cytoplasm. The catalysed reaction is RNA(n+1) + phosphate = RNA(n) + a ribonucleoside 5'-diphosphate. Functionally, involved in mRNA degradation. Catalyzes the phosphorolysis of single-stranded polyribonucleotides processively in the 3'- to 5'-direction. This is Polyribonucleotide nucleotidyltransferase from Haemophilus ducreyi (strain 35000HP / ATCC 700724).